The primary structure comprises 112 residues: UPF0102 protein NIS_1551 (112 aa).

Belongs to the UPF0102 family.

This chain is UPF0102 protein NIS_1551, found in Nitratiruptor sp. (strain SB155-2).